The sequence spans 374 residues: 2-oxoglutarate-Fe(II) type oxidoreductase ppzC (374 aa).

Positions Lys111 to Thr130 are disordered. Positions Tyr220 to Phe330 constitute a Fe2OG dioxygenase domain. Fe cation is bound by residues His254, Asp256, and His311. Arg321 lines the 2-oxoglutarate pocket.

The protein belongs to the iron/ascorbate-dependent oxidoreductase family. The cofactor is Fe(2+).

It carries out the reaction peramine + 2-oxoglutarate + O2 = 8-hydroxyperamine + succinate + CO2. Its pathway is secondary metabolite biosynthesis. Its function is as follows. 2-oxoglutarate-Fe(II) type oxidoreductase; part of the gene cluster that mediates the biosynthesis of pyrrolopyrazines, secondary metabolites showing insecticidal activity. Within the pathway, ppzC uses peramine as substrate for hydroxylation to yield the novel analog 8-hydroxyperamine. The single multifunctional NRPS ppzA is sufficient to produce peramine via condensation of 1-pyrroline-5-carboxylate and arginine, N-methylation of the alpha-amino group of arginine and reduction of the thioester and the cyclization to form an iminium ion resulting in release from the peptide synthetase. Deprotonation of this intermediate and oxidation of the pyrroline ring would give rise to peramine. In Epichloe species that produce only peramine, the peramine synthetase gene is not localized in a gene cluster, in contrast to Metarhizium species that contain additional pyrrolopyrazine biosynthesis genes. The 2-oxoglutarate-Fe(II) type oxidoreductase ppzC hydroxylates peramine to yield the newly identified compound 8-hydroxyperamine whereas ppzD converts L-proline into trans-4-hydroxy-L-proline, a precursor of peramine biosynthesis. The chain is 2-oxoglutarate-Fe(II) type oxidoreductase ppzC from Metarhizium rileyi (strain RCEF 4871) (Nomuraea rileyi).